Consider the following 294-residue polypeptide: Acetylglutamate kinase (294 aa).

Residues 63–64, Arg-85, and Asn-188 contribute to the substrate site; that span reads GG.

This sequence belongs to the acetylglutamate kinase family. ArgB subfamily.

It is found in the cytoplasm. It carries out the reaction N-acetyl-L-glutamate + ATP = N-acetyl-L-glutamyl 5-phosphate + ADP. The protein operates within amino-acid biosynthesis; L-arginine biosynthesis; N(2)-acetyl-L-ornithine from L-glutamate: step 2/4. Functionally, catalyzes the ATP-dependent phosphorylation of N-acetyl-L-glutamate. The chain is Acetylglutamate kinase from Methanococcus maripaludis (strain C5 / ATCC BAA-1333).